A 1888-amino-acid chain; its full sequence is Protein mms22 (1888 aa).

3 disordered regions span residues 12-34 (DSQD…RGNE), 151-258 (FSSD…ISSN), and 316-354 (RRKL…SRFD). 3 stretches are compositionally biased toward polar residues: residues 13–32 (SQDS…SQRG), 212–227 (SNLN…SSTI), and 338–348 (SDNSISTPTPT).

The protein belongs to the MMS22 family.

The protein localises to the nucleus. Functionally, involved in protection against replication-dependent DNA damage. May act by restoring active replication forks, repairing unusual DNA structures, and/or preventing aberrant DNA rearrangement at arrested replication forks. The polypeptide is Protein mms22 (mus7) (Schizosaccharomyces pombe (strain 972 / ATCC 24843) (Fission yeast)).